A 362-amino-acid polypeptide reads, in one-letter code: Phosphoserine aminotransferase (362 aa).

L-glutamate-binding residues include Ser9 and Arg42. Residues 76 to 77 (GR), Trp102, Thr153, Asp174, and Gln197 each bind pyridoxal 5'-phosphate. Position 198 is an N6-(pyridoxal phosphate)lysine (Lys198). A pyridoxal 5'-phosphate-binding site is contributed by 239–240 (NT).

This sequence belongs to the class-V pyridoxal-phosphate-dependent aminotransferase family. SerC subfamily. In terms of assembly, homodimer. Requires pyridoxal 5'-phosphate as cofactor.

The protein localises to the cytoplasm. The catalysed reaction is O-phospho-L-serine + 2-oxoglutarate = 3-phosphooxypyruvate + L-glutamate. It carries out the reaction 4-(phosphooxy)-L-threonine + 2-oxoglutarate = (R)-3-hydroxy-2-oxo-4-phosphooxybutanoate + L-glutamate. It functions in the pathway amino-acid biosynthesis; L-serine biosynthesis; L-serine from 3-phospho-D-glycerate: step 2/3. Its pathway is cofactor biosynthesis; pyridoxine 5'-phosphate biosynthesis; pyridoxine 5'-phosphate from D-erythrose 4-phosphate: step 3/5. Functionally, catalyzes the reversible conversion of 3-phosphohydroxypyruvate to phosphoserine and of 3-hydroxy-2-oxo-4-phosphonooxybutanoate to phosphohydroxythreonine. This chain is Phosphoserine aminotransferase, found in Escherichia coli O1:K1 / APEC.